The primary structure comprises 293 residues: Tyrosine recombinase XerD (293 aa).

The Core-binding (CB) domain maps to 1–83; sequence MHGLIADFIH…ALRKFYRFLL (83 aa). Residues 104-287 form the Tyr recombinase domain; that stretch reads HLPATLSGTE…SNQHLVAVYH (184 aa). Residues R144, K168, H239, R242, and H265 contribute to the active site. The O-(3'-phospho-DNA)-tyrosine intermediate role is filled by Y274.

This sequence belongs to the 'phage' integrase family. XerD subfamily. As to quaternary structure, forms a cyclic heterotetrameric complex composed of two molecules of XerC and two molecules of XerD.

The protein resides in the cytoplasm. Functionally, site-specific tyrosine recombinase, which acts by catalyzing the cutting and rejoining of the recombining DNA molecules. The XerC-XerD complex is essential to convert dimers of the bacterial chromosome into monomers to permit their segregation at cell division. It also contributes to the segregational stability of plasmids. This is Tyrosine recombinase XerD from Lacticaseibacillus casei (Lactobacillus casei).